We begin with the raw amino-acid sequence, 476 residues long: Cytosolic iron-sulfur assembly component 3 (476 aa).

Ala2 is subject to N-acetylalanine. [4Fe-4S] cluster-binding residues include Cys24, Cys71, Cys74, Cys77, Cys190, Cys246, Cys395, and Cys399.

Belongs to the NARF family. External component of the CIA complex. In the CIA complex, interacts directly with CIAO1 and MMS19.

Component of the cytosolic iron-sulfur protein assembly (CIA) complex, a multiprotein complex that mediates the incorporation of iron-sulfur cluster into extramitochondrial Fe/S proteins. Seems to negatively regulate the level of HIF1A expression, although this effect could be indirect. The sequence is that of Cytosolic iron-sulfur assembly component 3 from Pongo abelii (Sumatran orangutan).